The sequence spans 223 residues: Cytidine deaminase 3 (223 aa).

CMP/dCMP-type deaminase domains follow at residues 21 to 154 (TEPM…FSPD) and 184 to 223 (SDCS…WYRG). Residue 62–64 (NVE) coordinates substrate. Position 75 (His-75) interacts with Zn(2+). The active-site Proton donor is Glu-77. 2 residues coordinate Zn(2+): Cys-110 and Cys-113.

It belongs to the cytidine and deoxycytidylate deaminase family. As to quaternary structure, homodimer. Zn(2+) serves as cofactor.

It carries out the reaction cytidine + H2O + H(+) = uridine + NH4(+). The catalysed reaction is 2'-deoxycytidine + H2O + H(+) = 2'-deoxyuridine + NH4(+). This enzyme scavenges exogenous and endogenous cytidine and 2'-deoxycytidine for UMP synthesis. In Arabidopsis thaliana (Mouse-ear cress), this protein is Cytidine deaminase 3 (CDA3).